The chain runs to 312 residues: tRNA dimethylallyltransferase (312 aa).

Residue 11 to 18 (GLTATGKT) coordinates ATP. Residue 13-18 (TATGKT) participates in substrate binding. Residues 36–39 (DSMC) form an interaction with substrate tRNA region.

This sequence belongs to the IPP transferase family. As to quaternary structure, monomer. Mg(2+) is required as a cofactor.

The enzyme catalyses adenosine(37) in tRNA + dimethylallyl diphosphate = N(6)-dimethylallyladenosine(37) in tRNA + diphosphate. In terms of biological role, catalyzes the transfer of a dimethylallyl group onto the adenine at position 37 in tRNAs that read codons beginning with uridine, leading to the formation of N6-(dimethylallyl)adenosine (i(6)A). This chain is tRNA dimethylallyltransferase, found in Caldicellulosiruptor bescii (strain ATCC BAA-1888 / DSM 6725 / KCTC 15123 / Z-1320) (Anaerocellum thermophilum).